The primary structure comprises 56 residues: MSLRPCLTPSSMQYSDIYIHHTHTPHPHHTHTHTHHTPTHSLTSTFTLAVTPYPAF.

Over residues 21 to 38 (HTHTPHPHHTHTHTHHTP) the composition is skewed to basic residues. A disordered region spans residues 21–40 (HTHTPHPHHTHTHTHHTPTH).

This is an uncharacterized protein from Saccharomyces cerevisiae (strain ATCC 204508 / S288c) (Baker's yeast).